We begin with the raw amino-acid sequence, 435 residues long: Maltodextrin transport system permease protein MdxF (435 aa).

A run of 8 helical transmembrane segments spans residues leucine 35–alanine 55, phenylalanine 73–isoleucine 93, alanine 136–leucine 156, valine 199–phenylalanine 219, isoleucine 234–phenylalanine 254, leucine 293–leucine 313, histidine 337–phenylalanine 357, and valine 403–phenylalanine 423. An ABC transmembrane type-1 domain is found at leucine 195–alanine 422.

It belongs to the binding-protein-dependent transport system permease family. MalFG subfamily. In terms of assembly, the complex is composed of two ATP-binding proteins (MsmX), two transmembrane proteins (MdxF and MdxG) and a solute-binding protein (MdxE).

The protein resides in the cell membrane. Functionally, part of the ABC transporter complex involved in maltodextrin import. Probably responsible for the translocation of the substrate across the membrane. This Bacillus subtilis (strain 168) protein is Maltodextrin transport system permease protein MdxF (mdxF).